The primary structure comprises 134 residues: Arsenate reductase (134 aa).

Catalysis depends on nucleophile residues cysteine 11, cysteine 83, and cysteine 90. 2 disulfides stabilise this stretch: cysteine 11–cysteine 83 and cysteine 83–cysteine 90.

The protein belongs to the low molecular weight phosphotyrosine protein phosphatase family. Thioredoxin-coupled ArsC subfamily.

Its subcellular location is the cytoplasm. It carries out the reaction arsenate + [thioredoxin]-dithiol + H(+) = arsenite + [thioredoxin]-disulfide + H2O. Functionally, catalyzes the reduction of arsenate [As(V)] to arsenite [As(III)]. This chain is Arsenate reductase, found in Brevibacillus brevis (strain 47 / JCM 6285 / NBRC 100599).